The primary structure comprises 216 residues: Adenylate kinase (216 aa).

Residue 10 to 15 (GAGKGT) participates in ATP binding. The segment at 30-59 (STGDMLRAAVKAGTPLGLELKKVMDAGQLV) is NMP. AMP contacts are provided by residues Thr-31, Arg-36, 57-59 (QLV), 85-88 (GFPR), and Gln-92. Residues 122–159 (GRRVHLASGRTYHIQYNPPKVEGKDDVTGEDLIQRDDD) are LID. ATP contacts are provided by residues Arg-123 and 132–133 (TY). 2 residues coordinate AMP: Arg-156 and Arg-167. Gly-202 is a binding site for ATP.

The protein belongs to the adenylate kinase family. As to quaternary structure, monomer.

It localises to the cytoplasm. The catalysed reaction is AMP + ATP = 2 ADP. The protein operates within purine metabolism; AMP biosynthesis via salvage pathway; AMP from ADP: step 1/1. Catalyzes the reversible transfer of the terminal phosphate group between ATP and AMP. Plays an important role in cellular energy homeostasis and in adenine nucleotide metabolism. The sequence is that of Adenylate kinase from Pseudomonas putida (strain GB-1).